The following is a 775-amino-acid chain: Chitin synthase 6 (775 aa).

A run of 6 helical transmembrane segments spans residues 19 to 39 (VLLM…YCLV), 54 to 74 (CIIV…IMVV), 94 to 114 (LQWF…LFCI), 441 to 461 (FMQN…LAIM), 470 to 490 (LPVG…LYFG), and 498 to 518 (IWLY…YMVY). The segment covering 532-541 (RADAAAADSH) has biased composition (low complexity). Disordered regions lie at residues 532-603 (RADA…DGKF) and 702-775 (PSAF…KTSR). Positions 542 to 556 (TTAREAAEQAEKQGD) are enriched in basic and acidic residues. Positions 577-586 (NRESTTTSEL) are enriched in polar residues. The segment covering 702–713 (PSAFPHAHSASA) has biased composition (low complexity). N-linked (GlcNAc...) asparagine glycosylation occurs at Asn-724. Residues 732-741 (RSEDIQRFSE) show a composition bias toward basic and acidic residues. Residues 754–763 (SRNVGNSSFA) are compositionally biased toward polar residues. The N-linked (GlcNAc...) asparagine glycan is linked to Asn-759. The segment covering 766-775 (MAKRTPKTSR) has biased composition (basic residues).

Belongs to the chitin synthase family. Class VII subfamily.

It localises to the cell membrane. It carries out the reaction [(1-&gt;4)-N-acetyl-beta-D-glucosaminyl](n) + UDP-N-acetyl-alpha-D-glucosamine = [(1-&gt;4)-N-acetyl-beta-D-glucosaminyl](n+1) + UDP + H(+). Polymerizes chitin, a structural polymer of the cell wall and septum, by transferring the sugar moiety of UDP-GlcNAc to the non-reducing end of the growing chitin polymer. Shows additive effects in septum formation with CHS1, CHS2, CHS3A, CHS4, CHS5 and CHS7. Involved in virulence and mediates mycotoxin deoxinivalenol (DON) biosynthesis via the regulation of the expression of TRI4, TRI5 and TRI6. This Gibberella zeae (strain ATCC MYA-4620 / CBS 123657 / FGSC 9075 / NRRL 31084 / PH-1) (Wheat head blight fungus) protein is Chitin synthase 6.